The chain runs to 217 residues: Large ribosomal subunit protein uL1 (217 aa).

Belongs to the universal ribosomal protein uL1 family.

The protein is Large ribosomal subunit protein uL1 (RPL10A) of Candida glabrata (strain ATCC 2001 / BCRC 20586 / JCM 3761 / NBRC 0622 / NRRL Y-65 / CBS 138) (Yeast).